A 425-amino-acid polypeptide reads, in one-letter code: Serine--tRNA ligase (425 aa).

Residue 230 to 232 coordinates L-serine; that stretch reads TGE. 261 to 263 is a binding site for ATP; the sequence is RKE. Glutamate 284 lines the L-serine pocket. 348 to 351 lines the ATP pocket; the sequence is EISS. Residue serine 385 participates in L-serine binding.

The protein belongs to the class-II aminoacyl-tRNA synthetase family. Type-1 seryl-tRNA synthetase subfamily. As to quaternary structure, homodimer. The tRNA molecule binds across the dimer.

Its subcellular location is the cytoplasm. The catalysed reaction is tRNA(Ser) + L-serine + ATP = L-seryl-tRNA(Ser) + AMP + diphosphate + H(+). The enzyme catalyses tRNA(Sec) + L-serine + ATP = L-seryl-tRNA(Sec) + AMP + diphosphate + H(+). Its pathway is aminoacyl-tRNA biosynthesis; selenocysteinyl-tRNA(Sec) biosynthesis; L-seryl-tRNA(Sec) from L-serine and tRNA(Sec): step 1/1. Functionally, catalyzes the attachment of serine to tRNA(Ser). Is also able to aminoacylate tRNA(Sec) with serine, to form the misacylated tRNA L-seryl-tRNA(Sec), which will be further converted into selenocysteinyl-tRNA(Sec). The polypeptide is Serine--tRNA ligase (Wolbachia sp. subsp. Brugia malayi (strain TRS)).